Here is an 873-residue protein sequence, read N- to C-terminus: MEDAHDQSSRPLSFELESNHHSLRQLTPPICTSYPSNENEDVSQSLLPAPLNDRYPPISSQWPPGTIQQNPSEDPHQQTESEVASQTSWQRRQTTKSGSGLRRYPTRRINLVQGSVLSVDYPVPSAIRNSVEAKYRDSNDATAEEFTHLRYTAATCDPDDFTLRNGYNLRAAMFNRHTEILIAITYYNEDKVLTARTLHGVMQNIRDIVNLKKTQFWDKGGPAWQKIVVCLIFDGIGPCDKNTLDVLATVGIYQDGIMKHDVDGKETVAHIFEYTTQLSITPSQQLIRPQVDNPDNLPPVQMIFCLKQKNSKKINSHRWLFNAFGRVLNPEVCILIDAGTKPGHKSLLALWEAFYNNKHLGGACGEIHALLGPRWEKLVNPLVAAQNFEYKISNILDKPLESAFGYVSVLPGAFSAYRYRAIMGRPLEQYFHGDHTLSKKLGKKGIEGMNIFKKNMFLAEDRILCFELVAKAGYKWTLSYVKASKGETDVPEAPPEFLSQRRRWLNGSFAASLYSVMHFNRIYKSGHNLLRLVFLHVQLVYNICQLTMTWFSLASYWLTTSVIMDIVGTPSATIKNKGWPFGNDASPIVNNIIKALYLAFLMQQFFLALGNRPKGSQTSYILTFLYFAIVQLYILILSFYLVAQAFSGGNIDLDFDNGAGGFVGSFFTSTTGLVLIALVSTYGTYIIASILYCDPWHLLTSSWAYFLGMPLTINVLNVYAFCNWHDVSWGTKGSDDTASLPSAKTMKSVTQKSFVEEVDKPQVDIDIDFECTVRRALSPWQEPKEKKEVQLEDSYKTFRTNLVLLWTLCNGLLALLINNDSVRNLCLTTTSTDRTAWYFKVILWATSGLSVFRFLGALWFLGKTGLLCCFSRR.

The interval 1 to 105 (MEDAHDQSSR…KSGSGLRRYP (105 aa)) is disordered. Polar residues-rich tracts occupy residues 33–46 (SYPSNENEDVSQSL), 58–72 (ISSQWPPGTIQQNPS), and 80–98 (ESEVASQTSWQRRQTTKSG). An N-linked (GlcNAc...) asparagine glycan is attached at asparagine 506. The next 7 helical transmembrane spans lie at 532-554 (LVFLHVQLVYNICQLTMTWFSLA), 588-608 (IVNNIIKALYLAFLMQQFFLA), 621-641 (ILTFLYFAIVQLYILILSFYL), 672-692 (GLVLIALVSTYGTYIIASILY), 702-722 (SWAYFLGMPLTINVLNVYAFC), 802-822 (LVLLWTLCNGLLALLINNDSV), and 841-861 (VILWATSGLSVFRFLGALWFL).

Belongs to the chitin synthase family. Class III subfamily.

It is found in the cell membrane. The enzyme catalyses [(1-&gt;4)-N-acetyl-beta-D-glucosaminyl](n) + UDP-N-acetyl-alpha-D-glucosamine = [(1-&gt;4)-N-acetyl-beta-D-glucosaminyl](n+1) + UDP + H(+). Its function is as follows. Polymerizes chitin, a structural polymer of the cell wall and septum, by transferring the sugar moiety of UDP-GlcNAc to the non-reducing end of the growing chitin polymer. Plays an important role in septal growth or maintenance. Mediates colony spore formation. The chain is Chitin synthase F from Aspergillus niger (strain ATCC MYA-4892 / CBS 513.88 / FGSC A1513).